An 861-amino-acid chain; its full sequence is Transcription factor opdJ (861 aa).

Positions 11 to 37 (CSHCSKAKARCDRKVPCSRCVSKQLVC) form a DNA-binding region, zn(2)-C6 fungal-type.

It is found in the nucleus. Transcription factor that positively regulates the gene cluster that mediates the biosynthesis of oxopyrrolidines, polyketide-amino acid hybrid compounds with feature structures of tetramic acid. This chain is Transcription factor opdJ, found in Penicillium oxalicum (strain 114-2 / CGMCC 5302) (Penicillium decumbens).